A 168-amino-acid chain; its full sequence is Endoribonuclease YbeY (168 aa).

Zn(2+)-binding residues include His119, His123, and His129.

This sequence belongs to the endoribonuclease YbeY family. The cofactor is Zn(2+).

The protein resides in the cytoplasm. In terms of biological role, single strand-specific metallo-endoribonuclease involved in late-stage 70S ribosome quality control and in maturation of the 3' terminus of the 16S rRNA. This is Endoribonuclease YbeY from Gluconobacter oxydans (strain 621H) (Gluconobacter suboxydans).